We begin with the raw amino-acid sequence, 723 residues long: 1,3-beta-galactosyl-N-acetylhexosamine phosphorylase Cphy0577 (723 aa).

Aspartate 317 functions as the Proton donor in the catalytic mechanism.

Belongs to the glycoside hydrolase 112 family.

The catalysed reaction is beta-D-galactosyl-(1-&gt;3)-N-acetyl-D-glucosamine + phosphate = alpha-D-galactose 1-phosphate + N-acetyl-D-glucosamine. Functionally, reversibly phosphorolyzes beta-D-galactopyranosyl-(1-&gt;3)-N-acetyl-D-glucosamine to form alpha-D-galactopyranose 1-phosphate and acetyl-D-glucosamine. Active towards galacto-N-biose and lacto-N-biose. Does not phosphorolyze galacto-N-tetraose or lacto-N-tetraose. In the reverse reaction has activity toward N-acetyl-D-glucosamine and N-acetyl-D-galactosamine, but not L-rhamnose, D-glucose or D-galactose. The protein is 1,3-beta-galactosyl-N-acetylhexosamine phosphorylase Cphy0577 of Lachnoclostridium phytofermentans (strain ATCC 700394 / DSM 18823 / ISDg) (Clostridium phytofermentans).